Reading from the N-terminus, the 60-residue chain is Large ribosomal subunit protein uL30 (60 aa).

The protein belongs to the universal ribosomal protein uL30 family. Part of the 50S ribosomal subunit.

In Lactiplantibacillus plantarum (strain ATCC BAA-793 / NCIMB 8826 / WCFS1) (Lactobacillus plantarum), this protein is Large ribosomal subunit protein uL30.